Here is a 505-residue protein sequence, read N- to C-terminus: uncharacterized protein (505 aa).

The chain crosses the membrane as a helical span at residues 11-27 (IGIIGGGIVGWLAAIAL).

Its subcellular location is the membrane. This is an uncharacterized protein from Sinorhizobium fredii (strain NBRC 101917 / NGR234).